We begin with the raw amino-acid sequence, 294 residues long: Ribosomal RNA small subunit methyltransferase H (294 aa).

Residues 37–39 (GGH), aspartate 58, leucine 93, aspartate 105, and glutamine 112 each bind S-adenosyl-L-methionine.

This sequence belongs to the methyltransferase superfamily. RsmH family.

It localises to the cytoplasm. The catalysed reaction is cytidine(1402) in 16S rRNA + S-adenosyl-L-methionine = N(4)-methylcytidine(1402) in 16S rRNA + S-adenosyl-L-homocysteine + H(+). In terms of biological role, specifically methylates the N4 position of cytidine in position 1402 (C1402) of 16S rRNA. The chain is Ribosomal RNA small subunit methyltransferase H from Fervidobacterium nodosum (strain ATCC 35602 / DSM 5306 / Rt17-B1).